A 668-amino-acid chain; its full sequence is GTP-binding protein 1 (668 aa).

Residues 1 to 32 (MAAERSRSPVDSPVPASMFAPEPSSPGAARAA) form a disordered region. A phosphoserine mark is found at Ser-6, Ser-8, Ser-12, Ser-24, Ser-25, Ser-44, Ser-47, and Ser-69. Positions 158-389 (FLEVRVAVVG…LNLLSPRTSY (232 aa)) constitute a tr-type G domain. Positions 167 to 174 (GNVDAGKS) are G1. 167 to 174 (GNVDAGKS) provides a ligand contact to GTP. Residues 206-210 (GRTSS) are G2. The interval 252 to 255 (DLAG) is G3. GTP-binding positions include 252 to 256 (DLAGH) and 308 to 311 (TKID). The G4 stretch occupies residues 308-311 (TKID). The G5 stretch occupies residues 366 to 368 (SNV). Residues 573–595 (LLQTTNNSPMNSKPQQIKMQSTK) are compositionally biased toward polar residues. A disordered region spans residues 573–668 (LLQTTNNSPM…GACVTPASGC (96 aa)). Ser-580 carries the phosphoserine modification. A compositionally biased stretch (low complexity) spans 609-619 (GVPAAGGPPTG). Residues 624–637 (SLGTAQAASTSGLQ) show a composition bias toward polar residues. Residues 646–657 (GRRRGGQRHKVK) show a composition bias toward basic residues.

Belongs to the TRAFAC class translation factor GTPase superfamily. Classic translation factor GTPase family. GTPBP1 subfamily. As to quaternary structure, interacts with EXOSC2/RRP4, EXOSC3/RRP40, EXOSC5/RRP46, HNRNPD, HNRNPR and SYNCRIP. Identified in a complex with AANAT mRNA, but does not bind mRNA by itself. Detected in some neurons in the brain cortex. Detected in small arteries, dendritic cells and macrophages in the thymus. Detected in lung bronchi, in bronchial epithelial cells and in bronchial smooth muscle cells. Detected in smooth muscle cells in a broad range of organs (at protein level). Expressed in brain, thymus, lung, and kidney.

The protein localises to the cytoplasm. Functionally, promotes degradation of target mRNA species. Plays a role in the regulation of circadian mRNA stability. Binds GTP and has GTPase activity. This chain is GTP-binding protein 1 (Gtpbp1), found in Mus musculus (Mouse).